The chain runs to 576 residues: Putative export ATP-binding/permease protein RC1073 (576 aa).

The ABC transmembrane type-1 domain occupies 20 to 303 (LIIVMISLLS…IFELLSEMHL (284 aa)). 6 helical membrane passes run 21 to 41 (IIVM…GSVF), 57 to 77 (VDNS…ASFF), 135 to 155 (FLSF…LMFF), 158 to 178 (FKLA…LIKF), 242 to 262 (ALFF…VVWI), and 277 to 297 (IISF…IFEL). An ABC transporter domain is found at 336 to 572 (IEFKNVDFTY…SEIYRNICRE (237 aa)). An ATP-binding site is contributed by 371-378 (GRSGAGKS).

Belongs to the ABC transporter superfamily. In terms of assembly, homodimer.

The protein resides in the cell inner membrane. Part of an ABC transporter complex. Transmembrane domains (TMD) form a pore in the inner membrane and the ATP-binding domain (NBD) is responsible for energy generation. The sequence is that of Putative export ATP-binding/permease protein RC1073 from Rickettsia conorii (strain ATCC VR-613 / Malish 7).